Reading from the N-terminus, the 202-residue chain is FMN-dependent NADH:quinone oxidoreductase (202 aa).

FMN-binding positions include Ser-10, 16 to 18 (SHS), and 96 to 99 (MYNF).

Belongs to the azoreductase type 1 family. Homodimer. FMN is required as a cofactor.

The catalysed reaction is 2 a quinone + NADH + H(+) = 2 a 1,4-benzosemiquinone + NAD(+). The enzyme catalyses N,N-dimethyl-1,4-phenylenediamine + anthranilate + 2 NAD(+) = 2-(4-dimethylaminophenyl)diazenylbenzoate + 2 NADH + 2 H(+). Functionally, quinone reductase that provides resistance to thiol-specific stress caused by electrophilic quinones. Also exhibits azoreductase activity. Catalyzes the reductive cleavage of the azo bond in aromatic azo compounds to the corresponding amines. This Hydrogenovibrio crunogenus (strain DSM 25203 / XCL-2) (Thiomicrospira crunogena) protein is FMN-dependent NADH:quinone oxidoreductase.